Here is a 481-residue protein sequence, read N- to C-terminus: G-protein coupled receptor 37-like 1 (481 aa).

The signal sequence occupies residues 1–25 (MRWLWPLAVSLAVILAVGLSRVSGG). Disordered regions lie at residues 26 to 58 (APLHLGRHRAETQEQQSRSKRGTEDEEAKGVQQ) and 70 to 108 (PIHPAGLQPTKPLVATSPNPGKDGGTPDSGQELRGNLTG). The Extracellular segment spans residues 26-134 (APLHLGRHRA…ESSYSAYAIM (109 aa)). O-linked (GalNAc...) threonine glycans are attached at residues Thr79 and Thr85. The O-linked (GalNAc...) serine glycan is linked to Ser86. Thr95 carries an O-linked (GalNAc...) threonine glycan. Asn105 carries N-linked (GlcNAc...) asparagine glycosylation. O-linked (GalNAc...) threonine glycosylation is present at Thr107. The chain crosses the membrane as a helical span at residues 135 to 155 (LLALVVFAVGIVGNLSVMCIV). The Cytoplasmic portion of the chain corresponds to 156–167 (WHSYYLKSAWNS). A helical membrane pass occupies residues 168 to 188 (ILASLALWDFLVLFFCLPIVI). Over 189 to 205 (FNEITKQRLLGDVSCRA) the chain is Extracellular. Cys203 and Cys286 are joined by a disulfide. The chain crosses the membrane as a helical span at residues 206–226 (VPFMEVSSLGVTTFSLCALGI). The Cytoplasmic portion of the chain corresponds to 227–251 (DRFHVATSTLPKVRPIERCQSILAK). Residues 252 to 272 (LAVIWVGSMTLAVPELLLWQL) form a helical membrane-spanning segment. The Extracellular segment spans residues 273–310 (AQEPAPTMGTLDSCIMKPSASLPESLYSLVMTYQNARM). A helical membrane pass occupies residues 311 to 331 (WWYFGCYFCLPILFTVTCQLV). The Cytoplasmic portion of the chain corresponds to 332–361 (TWRVRGPPGRKSECRASKHEQCESQLNSTV). A helical transmembrane segment spans residues 362 to 382 (VGLTVVYAFCTLPENVCNIVV). The Extracellular segment spans residues 383–398 (AYLSTELTRQTLDLLG). A helical membrane pass occupies residues 399–419 (LINQFSTFFKGAITPVLLLCI). The Cytoplasmic portion of the chain corresponds to 420-481 (CRPLGQAFLD…PPLLPLGTPC (62 aa)). The residue at position 471 (Ser471) is a Phosphoserine. Thr479 is subject to Phosphothreonine.

It belongs to the G-protein coupled receptor 1 family. As to quaternary structure, interacts with the PTCH1 receptor. O-glycosylated. Post-translationally, undergoes metalloprotease-mediated cleavage which reduces its constitutive activity. In terms of processing, ubiquitinated. In terms of tissue distribution, expressed in primary cortical astrocytes (at protein level). Expressed in the central nervous system.

It is found in the cell membrane. Its subcellular location is the cell projection. It localises to the cilium membrane. Its function is as follows. G-protein coupled receptor. Has been shown to bind the neuroprotective and glioprotective factor prosaposin (PSAP), leading to endocytosis followed by an ERK phosphorylation cascade. However, other studies have shown that prosaposin does not increase activity. It has been suggested that GPR37L1 is a constitutively active receptor which signals through the guanine nucleotide-binding protein G(s) subunit alpha. Participates in the regulation of postnatal cerebellar development by modulating the Shh pathway. Regulates baseline blood pressure in females and protects against cardiovascular stress in males. Mediates inhibition of astrocyte glutamate transporters and reduction in neuronal N-methyl-D-aspartate receptor activity. The polypeptide is G-protein coupled receptor 37-like 1 (GPR37L1) (Homo sapiens (Human)).